Consider the following 214-residue polypeptide: MAELLNVKPTRMELLNLKRRIQLAKKGHKLLKDKQDALIMEFFTIYDEALQLRRELNEKMGVAFETLTRAQIEAGTLPLREAALAVKPNKEVEIKRRNVMGVSVPLIEAEGFKRKASERGYAFVSTSPFVDIAAEKFEEVLDLAVRLAEVEETLKRLAREIETTKRRVNALEYIIIPRMEATVKFIKQRLDEMERENFFRLKRVKALIEARSGS.

Belongs to the V-ATPase D subunit family. As to quaternary structure, has multiple subunits with at least A(3), B(3), C, D, E, F, H, I and proteolipid K(x).

It is found in the cell membrane. Its function is as follows. Component of the A-type ATP synthase that produces ATP from ADP in the presence of a proton gradient across the membrane. The sequence is that of A-type ATP synthase subunit D from Thermococcus gammatolerans (strain DSM 15229 / JCM 11827 / EJ3).